Consider the following 411-residue polypeptide: Glutamate dehydrogenase 2, mitochondrial (411 aa).

The N-terminal 18 residues, 1–18 (MNALAATSRNFRQAARLL), are a transit peptide targeting the mitochondrion. Residue lysine 102 is part of the active site.

The protein belongs to the Glu/Leu/Phe/Val dehydrogenases family. In terms of tissue distribution, expressed in roots. Expressed ubiquitously in various tissues.

Its subcellular location is the mitochondrion. The enzyme catalyses L-glutamate + NAD(+) + H2O = 2-oxoglutarate + NH4(+) + NADH + H(+). It catalyses the reaction L-glutamate + NADP(+) + H2O = 2-oxoglutarate + NH4(+) + NADPH + H(+). The polypeptide is Glutamate dehydrogenase 2, mitochondrial (GDH2) (Oryza sativa subsp. japonica (Rice)).